The following is a 234-amino-acid chain: Ribonuclease HII (234 aa).

In terms of domain architecture, RNase H type-2 spans 30-221; sequence GPVAGVDEAG…VRNAAMGSSL (192 aa). A divalent metal cation-binding residues include Asp-36, Glu-37, and Asp-130.

It belongs to the RNase HII family. Mn(2+) serves as cofactor. Mg(2+) is required as a cofactor.

It localises to the cytoplasm. It carries out the reaction Endonucleolytic cleavage to 5'-phosphomonoester.. In terms of biological role, endonuclease that specifically degrades the RNA of RNA-DNA hybrids. This chain is Ribonuclease HII, found in Mycobacteroides abscessus (strain ATCC 19977 / DSM 44196 / CCUG 20993 / CIP 104536 / JCM 13569 / NCTC 13031 / TMC 1543 / L948) (Mycobacterium abscessus).